The sequence spans 400 residues: Large envelope protein (400 aa).

Methionine 1 is modified (N-acetylmethionine). The N-myristoyl glycine; by host moiety is linked to residue glycine 2. Positions 2–119 (GGRLPKPRKG…PPLRDSHPQA (118 aa)) are pre-S1. Positions 2 to 174 (GGRLPKPRKG…SSRIGDPAPT (173 aa)) are pre-S. At 2–181 (GGRLPKPRKG…APTMENITSG (180 aa)) the chain is on the virion surface; in external conformation side. Residues 2-253 (GGRLPKPRKG…PGYRWMCLRR (252 aa)) are Intravirion; in internal conformation-facing. Arginine 4 is a glycosylation site (N-linked (GlcNAc...) asparagine). The disordered stretch occupies residues 84 to 116 (TLTTVPAVPPPASTNRQSGRQPTPISPPLRDSH). Polar residues predominate over residues 96-106 (STNRQSGRQPT). The tract at residues 120 to 174 (MQWNSTKFHQTLQDPRVRGLYFPAGGSSSGTVNPAPNIASHISSISSRIGDPAPT) is pre-S2. Residues 182–202 (FLGPLLVLQAGFFLLTRILTI) form a helical membrane-spanning segment. The Intravirion; in external conformation segment spans residues 203–253 (PQSLDSWWTSLNFLGEAPVCLGQNSQSPTSNHSPTSCPPICPGYRWMCLRR). A helical membrane pass occupies residues 254 to 274 (FIIFLFILLLCLIFLLVLLDC). Residues 275 to 348 (QGMLPVCPLI…WASVRFSWLS (74 aa)) are Virion surface-facing. Asparagine 320 is a glycosylation site (N-linked (GlcNAc...) asparagine; by host). Residues 349–369 (LLVPFVQWFVGLSPTVWLSVI) traverse the membrane as a helical segment. The Intravirion portion of the chain corresponds to 370–375 (WMMWYW). The chain crosses the membrane as a helical span at residues 376–398 (GPSLYNILSPFIPLLPIFFCLWV). Topologically, residues 399–400 (YI) are virion surface.

It belongs to the orthohepadnavirus major surface antigen family. As to quaternary structure, in its internal form (Li-HBsAg), interacts with the capsid protein and with the isoform S. Interacts with host chaperone CANX. In terms of assembly, associates with host chaperone CANX through its pre-S2 N glycan; this association may be essential for isoform M proper secretion. Interacts with isoform L. Interacts with the antigens of satellite virus HDV (HDVAgs); this interaction is required for encapsidation of HDV genomic RNA. In terms of processing, isoform M is N-terminally acetylated by host at a ratio of 90%, and N-glycosylated by host at the pre-S2 region. Post-translationally, myristoylated.

Its subcellular location is the virion membrane. The large envelope protein exists in two topological conformations, one which is termed 'external' or Le-HBsAg and the other 'internal' or Li-HBsAg. In its external conformation the protein attaches the virus to cell receptors and thereby initiating infection. This interaction determines the species specificity and liver tropism. This attachment induces virion internalization predominantly through caveolin-mediated endocytosis. The large envelope protein also assures fusion between virion membrane and endosomal membrane. In its internal conformation the protein plays a role in virion morphogenesis and mediates the contact with the nucleocapsid like a matrix protein. Its function is as follows. The middle envelope protein plays an important role in the budding of the virion. It is involved in the induction of budding in a nucleocapsid independent way. In this process the majority of envelope proteins bud to form subviral lipoprotein particles of 22 nm of diameter that do not contain a nucleocapsid. This chain is Large envelope protein, found in Hepatitis B virus genotype A3 (isolate Cameroon/CMR711/1994) (HBV-A).